Reading from the N-terminus, the 641-residue chain is MTDTSTQNTATPTDEYGAEIHPKHSFSPIEKTVESFGKTFTLEVPETEIQLDDSPTGPNEPVRIYRTRGPWAEPTKGLEGLRSEWIEARDDVEAYEGRRRNLLDDGNRAVKRGEASEEWKGSTRPTLRAKEGKRVTQMHYARQGIITPEMEYVALREHCDVEKVREQVASGKAIIPNNINHPESEPMIIGNAFTTKINANIGNSAVTSSIREEVDKLRWATRWGADTVMDLSTGNDIHTTREWILRNSPVPIGTVPIYQALEKVDGVAEDLTWEIFRDTVIEQCEQGVDYMTIHAGVRLPFVPLTTKRVTGIVSRGGSIMAGWCLAHHKESFLYENFDELCEIFAKYDVAFSLGDGLRPGSIADANDAAQFAELKTIGELTHRAWEYDVQVMVEGPGHVPLNMVQVNNEKEQEWCGGAPFYTLGPLVTDIAPGYDHITSAIGAANIAMGGTAMLCYVTPKEHLGLPNKDDVKTGVITYKVSAHAADVAKGHPGAHEWDDAMSKARFEFRWHDQFALSLDPDTAQAYHDETLPAEPAKTAHFCSMCGPKFCSMRISQDIRDAFGDEIDEALATDQKQSLVKDLGLPGFGRQSVDGIDSLSAAGEEEMAEEFRRAGSQLYLNRDEAKEVAEDLQKEAAAHGER.

A compositionally biased stretch (polar residues) spans Met-1–Pro-12. The disordered stretch occupies residues Met-1–Ser-25. Substrate-binding positions include Asn-200, Met-229, Tyr-258, His-294, Ser-314–Gly-316, Asp-355–Arg-358, and Glu-394. A Zn(2+)-binding site is contributed by His-398. Residue Tyr-421 coordinates substrate. A Zn(2+)-binding site is contributed by His-462. Residues Cys-542, Cys-545, and Cys-550 each contribute to the [4Fe-4S] cluster site.

It belongs to the ThiC family. Requires [4Fe-4S] cluster as cofactor.

The enzyme catalyses 5-amino-1-(5-phospho-beta-D-ribosyl)imidazole + S-adenosyl-L-methionine = 4-amino-2-methyl-5-(phosphooxymethyl)pyrimidine + CO + 5'-deoxyadenosine + formate + L-methionine + 3 H(+). It functions in the pathway cofactor biosynthesis; thiamine diphosphate biosynthesis. Its function is as follows. Catalyzes the synthesis of the hydroxymethylpyrimidine phosphate (HMP-P) moiety of thiamine from aminoimidazole ribotide (AIR) in a radical S-adenosyl-L-methionine (SAM)-dependent reaction. This is Phosphomethylpyrimidine synthase from Corynebacterium jeikeium (strain K411).